The following is a 1068-amino-acid chain: WD repeat-containing protein on Y chromosome (1068 aa).

WD repeat units lie at residues 155 to 199 (DEVT…IRTA), 201 to 242 (SESI…RGPF), 322 to 361 (RIPLGVSTFFVAESHNIVVTGGPDTFVRIWDVYIPTEPSA), 365 to 404 (GHNGGIVLVFVQPEENKVYSVDYQKIIKVWDLHEHTLLQT), 455 to 494 (THAAPVSVVLYNRLFRNVVSCGLDSYIIVWDPWTGRRKII), 507 to 546 (IIDIEITAACFDPLEQFLLTGARDGSLKIWNYNNAVVVRN), and 594 to 634 (FHTD…RRYS). Residues 657–687 (SKRLASRPTPGNHGLQMGRAGRSTVLNRPED) form a disordered region. 2 WD repeats span residues 746-785 (KTGDCVLTMCTDRKNRYLYTGTAFGYIKVWHIENFCVPET) and 829-868 (GHLKAINSISFINLPKIIFTGSHDYSCRLWTQGGRYLGTL). The disordered stretch occupies residues 1026 to 1068 (SAINIKQPSRRRSDKTNDTRNVRTPRARDLIALEMSSSHASQS). The span at 1039-1056 (DKTNDTRNVRTPRARDLI) shows a compositional bias: basic and acidic residues.

This is WD repeat-containing protein on Y chromosome from Drosophila yakuba (Fruit fly).